The primary structure comprises 301 residues: MAPQLLSSSNFKSLFDSVDTFLFDCDGVIWKGETLIDGVSQTLDLIRSKGKNVVFVTNNSVKSRRQYAEKFRSLGVTSITQDEIFSSSFAAAMYLKVNNFPKDKKVYVIGGEGVLEELQIAGFTGLGGPEDGEKKAQWKSNSLFEHDKSVGAVVVGLDPNINYYKLQYGTLCVRENPGCLFIATNRDAVGHMTDLQEWPGAGCMVAAMCGSTEREPIVVGKPSTFMMDFLLQKFGTETSRMCMVGDRLDTDILFGQNAGCKTLLVLTGVTSESNLLDKGNKIEPDYYTSTVSDIIKLMESP.

The active-site Nucleophile is the aspartate 19.

This sequence belongs to the HAD-like hydrolase superfamily. CbbY/CbbZ/Gph/YieH family.

It carries out the reaction 2-phosphoglycolate + H2O = glycolate + phosphate. In terms of biological role, dephosphorylates 2-phosphoglycolate, but does not contribute to photorespiratory metabolism. The polypeptide is Phosphoglycolate phosphatase 2 (PGLP2) (Arabidopsis thaliana (Mouse-ear cress)).